The sequence spans 1673 residues: Protein TIC 214 (1673 aa).

Helical transmembrane passes span 32–52 (AGLY…ILLI), 70–90 (LILG…YIAF), 93–113 (PYTL…GNNL), 130–150 (LEIL…TCIF), 170–190 (MVFL…VLMC), and 218–238 (FFLV…IQSL). Composition is skewed to basic and acidic residues over residues 264-276 (LKKS…GKST) and 283-298 (SHEK…SKLE). Disordered stretches follow at residues 264–302 (LKKS…NEDE), 547–611 (VVFD…YSIR), 1120–1146 (NKQS…TDNL), and 1370–1433 (QQNQ…SEDD). A compositionally biased stretch (polar residues) spans 562-586 (DNGNIQNNSSDKTINPQNNLTNLKP). The span at 597-611 (TTEKEPKDDKSYSIR) shows a compositional bias: basic and acidic residues. The segment covering 1120–1135 (NKQSLQKRNSSGNSNL) has biased composition (polar residues). Residues 1370-1379 (QQNQTTTKMN) show a composition bias toward low complexity. Basic and acidic residues-rich tracts occupy residues 1380–1399 (TETK…KKTE) and 1406–1423 (TKNK…KETE).

It belongs to the TIC214 family. As to quaternary structure, part of the Tic complex.

Its subcellular location is the plastid. The protein localises to the chloroplast inner membrane. In terms of biological role, involved in protein precursor import into chloroplasts. May be part of an intermediate translocation complex acting as a protein-conducting channel at the inner envelope. The protein is Protein TIC 214 of Cuscuta gronovii (Common dodder).